The primary structure comprises 249 residues: Galactan endo-beta-1,3-galactanase (249 aa).

The signal sequence occupies residues 1–21 (MKLFVVLACLAAPGTFPFVDA). Residues 34–247 (STYWNNFYPW…KARNVQVTRT (214 aa)) form the GH16 domain. Asn48 carries N-linked (GlcNAc...) asparagine glycosylation. The active-site Nucleophile is the Glu138. Glu143 (proton donor) is an active-site residue. Asn156 carries an N-linked (GlcNAc...) asparagine glycan.

The protein belongs to the glycosyl hydrolase 16 family. Post-translationally, N-glycosylated.

The enzyme catalyses The enzyme specifically hydrolyzes beta-1,3-galactan and beta-1,3-galactooligosaccharides.. Its function is as follows. Specifically hydrolyzes beta-1,3-galactan in an endo-fashion. Requires at least 3 contiguous beta-1,3-residues. The polypeptide is Galactan endo-beta-1,3-galactanase (EN3GAL) (Flammulina velutipes (Agaricus velutipes)).